The chain runs to 264 residues: Phosphatidylglycerol--prolipoprotein diacylglyceryl transferase (264 aa).

4 helical membrane-spanning segments follow: residues Leu17–Gly37, Leu57–Tyr77, Ile89–Val109, and Gly118–Ala138. Arg140 provides a ligand contact to a 1,2-diacyl-sn-glycero-3-phospho-(1'-sn-glycerol). 3 helical membrane passes run Pro173–Phe193, Gly201–Thr221, and Met237–Ala257.

Belongs to the Lgt family.

The protein resides in the cell inner membrane. The catalysed reaction is L-cysteinyl-[prolipoprotein] + a 1,2-diacyl-sn-glycero-3-phospho-(1'-sn-glycerol) = an S-1,2-diacyl-sn-glyceryl-L-cysteinyl-[prolipoprotein] + sn-glycerol 1-phosphate + H(+). The protein operates within protein modification; lipoprotein biosynthesis (diacylglyceryl transfer). Its function is as follows. Catalyzes the transfer of the diacylglyceryl group from phosphatidylglycerol to the sulfhydryl group of the N-terminal cysteine of a prolipoprotein, the first step in the formation of mature lipoproteins. This Bordetella avium (strain 197N) protein is Phosphatidylglycerol--prolipoprotein diacylglyceryl transferase.